The sequence spans 299 residues: MAYERFTSAITLLLHWRNRLDPYWKLARGDRPVGFLLLLWPTWWALWLAADGVPPWWTLCVFTTGIWLTRSAGCVINDYTDRWLDPHVERTCTRPLVTGTVSPRNALLMFGTLMLIAFGLVLTMNRLTVLLSVAGLFLAMTYPYLKRYTHLPQVYLGIAFGWGIPMAFAAIQGKVPTLAWLLYVANILWTTAYDTWYAMVDRDDDIKMGAKSTAILFADLDLVVQGVLYTLMLLTLCLVGLRATLSHTYWISLISAVALIGYQFIIARRREPTACFRAFMHNNWVGMTIFAGIALATTH.

A run of 8 helical transmembrane segments spans residues 33-53 (VGFL…ADGV), 56-76 (WWTL…GCVI), 105-125 (NALL…LTMN), 151-171 (LPQV…FAAI), 180-200 (WLLY…YAMV), 214-234 (AILF…LMLL), 247-267 (HTYW…FIIA), and 278-298 (AFMH…LATT).

The protein belongs to the UbiA prenyltransferase family. Requires Mg(2+) as cofactor.

The protein resides in the cell inner membrane. It catalyses the reaction all-trans-octaprenyl diphosphate + 4-hydroxybenzoate = 4-hydroxy-3-(all-trans-octaprenyl)benzoate + diphosphate. The protein operates within cofactor biosynthesis; ubiquinone biosynthesis. Its function is as follows. Catalyzes the prenylation of para-hydroxybenzoate (PHB) with an all-trans polyprenyl group. Mediates the second step in the final reaction sequence of ubiquinone-8 (UQ-8) biosynthesis, which is the condensation of the polyisoprenoid side chain with PHB, generating the first membrane-bound Q intermediate 3-octaprenyl-4-hydroxybenzoate. The protein is 4-hydroxybenzoate octaprenyltransferase of Xylella fastidiosa (strain M23).